The following is a 253-amino-acid chain: Triosephosphate isomerase (253 aa).

N8–K10 contacts substrate. H93 functions as the Electrophile in the catalytic mechanism. E165 serves as the catalytic Proton acceptor. Substrate contacts are provided by residues G171, S210, and G231–G232.

This sequence belongs to the triosephosphate isomerase family. Homodimer.

The protein resides in the cytoplasm. It catalyses the reaction D-glyceraldehyde 3-phosphate = dihydroxyacetone phosphate. It participates in carbohydrate biosynthesis; gluconeogenesis. It functions in the pathway carbohydrate degradation; glycolysis; D-glyceraldehyde 3-phosphate from glycerone phosphate: step 1/1. Functionally, involved in the gluconeogenesis. Catalyzes stereospecifically the conversion of dihydroxyacetone phosphate (DHAP) to D-glyceraldehyde-3-phosphate (G3P). This is Triosephosphate isomerase from Francisella tularensis subsp. novicida (strain U112).